The sequence spans 527 residues: UPF0053 protein YegH (527 aa).

The next 5 membrane-spanning stretches (helical) occupy residues 14 to 34 (ITLI…IAIL), 51 to 71 (LLLA…LVTL), 81 to 101 (FTFS…LFKA), 145 to 165 (ITAV…VIAI), and 185 to 205 (IVIL…AEGF). CBS domains lie at 306-366 (MTSR…GEPL) and 371-429 (LIRQ…PNEV).

Belongs to the UPF0053 family.

It localises to the cell membrane. This chain is UPF0053 protein YegH (yegH), found in Escherichia coli (strain K12).